Reading from the N-terminus, the 399-residue chain is tRNA-dihydrouridine(16/17) synthase [NAD(P)(+)] (399 aa).

Residues 24–26 and Gln-80 contribute to the FMN site; that span reads PMV. Catalysis depends on Cys-109, which acts as the Proton donor. FMN contacts are provided by residues Lys-148, His-176, 211 to 213, and 235 to 236; these read NGN and AE.

The protein belongs to the Dus family. Dus1 subfamily. The cofactor is FMN.

The protein localises to the nucleus. Its subcellular location is the mitochondrion. It catalyses the reaction 5,6-dihydrouridine(16) in tRNA + NADP(+) = uridine(16) in tRNA + NADPH + H(+). It carries out the reaction 5,6-dihydrouridine(16) in tRNA + NAD(+) = uridine(16) in tRNA + NADH + H(+). The catalysed reaction is 5,6-dihydrouridine(17) in tRNA + NAD(+) = uridine(17) in tRNA + NADH + H(+). The enzyme catalyses 5,6-dihydrouridine(17) in tRNA + NADP(+) = uridine(17) in tRNA + NADPH + H(+). It catalyses the reaction a 5,6-dihydrouridine in mRNA + NAD(+) = a uridine in mRNA + NADH + H(+). It carries out the reaction a 5,6-dihydrouridine in mRNA + NADP(+) = a uridine in mRNA + NADPH + H(+). Catalyzes the synthesis of dihydrouridine, a modified base found in the D-loop of most tRNAs. Also able to mediate dihydrouridylation of some mRNAs, thereby affecting their translation. This is tRNA-dihydrouridine(16/17) synthase [NAD(P)(+)] from Schizosaccharomyces pombe (strain 972 / ATCC 24843) (Fission yeast).